Consider the following 192-residue polypeptide: Probable GTP-binding protein EngB (192 aa).

The EngB-type G domain occupies Gly22–Gln192. Residues Gly30 to Ser37, Gly57 to Leu61, Asp75 to Gly78, Thr142 to Asp145, and Tyr172 to Ser174 each bind GTP. Residues Ser37 and Thr59 each contribute to the Mg(2+) site.

Belongs to the TRAFAC class TrmE-Era-EngA-EngB-Septin-like GTPase superfamily. EngB GTPase family. The cofactor is Mg(2+).

Functionally, necessary for normal cell division and for the maintenance of normal septation. In Chlorobaculum tepidum (strain ATCC 49652 / DSM 12025 / NBRC 103806 / TLS) (Chlorobium tepidum), this protein is Probable GTP-binding protein EngB.